An 85-amino-acid polypeptide reads, in one-letter code: UPF0410 protein YdaS (85 aa).

3 helical membrane passes run 2–22 (LSFL…SAIV), 28–48 (GGIF…HGLL), and 58–78 (FAIF…GLIF).

It belongs to the UPF0410 family.

It localises to the cell membrane. The polypeptide is UPF0410 protein YdaS (ydaS) (Bacillus subtilis (strain 168)).